The chain runs to 427 residues: Peptidyl-prolyl cis-trans isomerase sig-7 (427 aa).

A PPIase cyclophilin-type domain is found at 6–161 (ETTLGDLIID…KDIRISHTIV (156 aa)). A coiled-coil region spans residues 195–227 (DEKEDEDEGKTAEEIAEELQQREMAEQAQILEM). The region spanning 241–319 (NVLFVCKLNP…RRIHVDFSQS (79 aa)) is the RRM domain. A compositionally biased stretch (polar residues) spans 322–334 (QNYKYKPKSQQQE). Positions 322-427 (QNYKYKPKSQ…RSPDRRRDRR (106 aa)) are disordered. Positions 351–370 (SHQRSPSPRRRRSPSPKKDK) are enriched in basic residues. Residues 384–427 (SSDNHRDRDRSYRDNNRDRRDNHRDSDRDRRRHDRSPDRRRDRR) are compositionally biased toward basic and acidic residues.

It belongs to the cyclophilin-type PPIase family. PPIL4 subfamily. As to quaternary structure, interacts with ama-1, the catalytic subunit of the RNA polymerase II (RNA pol II) complex. Ubiquitous.

The protein localises to the nucleus. The protein resides in the nucleoplasm. Its subcellular location is the chromosome. It catalyses the reaction [protein]-peptidylproline (omega=180) = [protein]-peptidylproline (omega=0). Its function is as follows. Probable PPIase that accelerates the folding of proteins. It catalyzes the cis-trans isomerization of proline imidic peptide bonds in oligopeptides. Involved in RNA polymerase II (RNA pol II)-mediated transcription elongation, and in primary transcript splicing, including co-transcriptional trans-splicing, in association with the catalytic subunit of the RNA pol II complex ama-1. Also plays a role in the regulation of elongation-dependent phosphorylation of ama-1 to control transcription. Involved in the transcription of several genes during embryogenesis and in particular, of genes related to developmental processes such as gastrulation, and also regulates transcription in germ cells from embryogenesis to adulthood. The sequence is that of Peptidyl-prolyl cis-trans isomerase sig-7 from Caenorhabditis elegans.